A 363-amino-acid chain; its full sequence is UDP-N-acetylglucosamine--N-acetylmuramyl-(pentapeptide) pyrophosphoryl-undecaprenol N-acetylglucosamine transferase (363 aa).

UDP-N-acetyl-alpha-D-glucosamine-binding positions include 15–17, asparagine 127, arginine 163, serine 191, isoleucine 244, 263–268, and glutamine 288; these read TGG and ALTVSE.

The protein belongs to the glycosyltransferase 28 family. MurG subfamily.

The protein localises to the cell inner membrane. The catalysed reaction is di-trans,octa-cis-undecaprenyl diphospho-N-acetyl-alpha-D-muramoyl-L-alanyl-D-glutamyl-meso-2,6-diaminopimeloyl-D-alanyl-D-alanine + UDP-N-acetyl-alpha-D-glucosamine = di-trans,octa-cis-undecaprenyl diphospho-[N-acetyl-alpha-D-glucosaminyl-(1-&gt;4)]-N-acetyl-alpha-D-muramoyl-L-alanyl-D-glutamyl-meso-2,6-diaminopimeloyl-D-alanyl-D-alanine + UDP + H(+). Its pathway is cell wall biogenesis; peptidoglycan biosynthesis. Its function is as follows. Cell wall formation. Catalyzes the transfer of a GlcNAc subunit on undecaprenyl-pyrophosphoryl-MurNAc-pentapeptide (lipid intermediate I) to form undecaprenyl-pyrophosphoryl-MurNAc-(pentapeptide)GlcNAc (lipid intermediate II). The polypeptide is UDP-N-acetylglucosamine--N-acetylmuramyl-(pentapeptide) pyrophosphoryl-undecaprenol N-acetylglucosamine transferase (Pectobacterium carotovorum subsp. carotovorum (strain PC1)).